A 72-amino-acid chain; its full sequence is UPF0270 protein YheU (72 aa).

Belongs to the UPF0270 family.

The chain is UPF0270 protein YheU from Shigella flexneri serotype 5b (strain 8401).